The chain runs to 1199 residues: DNA-directed RNA polymerase subunit beta' (1199 aa).

Residues Cys-60, Cys-62, Cys-75, and Cys-78 each contribute to the Zn(2+) site. The Mg(2+) site is built by Asp-449, Asp-451, and Asp-453. 4 residues coordinate Zn(2+): Cys-818, Cys-892, Cys-899, and Cys-902.

It belongs to the RNA polymerase beta' chain family. The RNAP catalytic core consists of 2 alpha, 1 beta, 1 beta' and 1 omega subunit. When a sigma factor is associated with the core the holoenzyme is formed, which can initiate transcription. Requires Mg(2+) as cofactor. Zn(2+) serves as cofactor.

It catalyses the reaction RNA(n) + a ribonucleoside 5'-triphosphate = RNA(n+1) + diphosphate. Its function is as follows. DNA-dependent RNA polymerase catalyzes the transcription of DNA into RNA using the four ribonucleoside triphosphates as substrates. This Bacillus licheniformis (strain ATCC 14580 / DSM 13 / JCM 2505 / CCUG 7422 / NBRC 12200 / NCIMB 9375 / NCTC 10341 / NRRL NRS-1264 / Gibson 46) protein is DNA-directed RNA polymerase subunit beta'.